We begin with the raw amino-acid sequence, 448 residues long: 5-hydroxytryptamine receptor 7 (448 aa).

Topologically, residues 1 to 86 are extracellular; sequence MMDVNSSGRP…INYGRVEKVV (86 aa). Asn5 and Asn69 each carry an N-linked (GlcNAc...) asparagine glycan. A helical membrane pass occupies residues 87–111; it reads IGSILTLITLLTIAGNCLVVISVCF. Residues 112–121 are Cytoplasmic-facing; that stretch reads VKKLRQPSNY. A helical membrane pass occupies residues 122–143; that stretch reads LIVSLALADLSVAVAVMPFVSV. The Extracellular segment spans residues 144–155; sequence TDLIGGKWIFGH. The helical transmembrane segment at 156-181 threads the bilayer; the sequence is FFCNVFIAMDVMCCTASIMTLCVISI. Cys158 and Cys234 are oxidised to a cystine. Residue Asp165 participates in serotonin binding. Over 182–201 the chain is Cytoplasmic; that stretch reads DRYLGITRPLTYPVRQNGKC. Residues 202 to 222 form a helical membrane-spanning segment; that stretch reads MAKMILSVWLLSASITLPPLF. Topologically, residues 223–240 are extracellular; that stretch reads GWAQNVNDDKVCLISQDF. Residues 241–263 form a helical membrane-spanning segment; it reads GYTIYSTAVAFYIPMSVMLFMYY. Over 264–329 the chain is Cytoplasmic; that stretch reads QIYKAARKSA…SIFKREQKAA (66 aa). The chain crosses the membrane as a helical span at residues 330 to 355; the sequence is TTLGIIVGAFTVCWLPFFLLSTARPF. At 356 to 366 the chain is on the extracellular side; that stretch reads ICGTSCSCIPL. Residues 367–390 traverse the membrane as a helical segment; sequence WVERTCLWLGYANSLINPFIYAFF. Over 391-448 the chain is Cytoplasmic; it reads NRDLRTTYRSLLQCQYRNINRKLSAAGMHEALKLAERPERSEFVLQNCDHCGKKGHDT. Cys404 carries the S-palmitoyl cysteine lipid modification.

The protein belongs to the G-protein coupled receptor 1 family.

The protein resides in the cell membrane. Its function is as follows. G-protein coupled receptor for 5-hydroxytryptamine (serotonin), a biogenic hormone that functions as a neurotransmitter, a hormone and a mitogen. Ligand binding causes a conformation change that triggers signaling via guanine nucleotide-binding proteins (G proteins) and modulates the activity of downstream effectors. HTR7 is coupled to G(s) G alpha proteins and mediates activation of adenylate cyclase activity. This chain is 5-hydroxytryptamine receptor 7 (Htr7), found in Mus musculus (Mouse).